The sequence spans 139 residues: Small ribosomal subunit protein uS9 (139 aa).

It belongs to the universal ribosomal protein uS9 family.

The protein is Small ribosomal subunit protein uS9 of Coxiella burnetii (strain CbuK_Q154) (Coxiella burnetii (strain Q154)).